The chain runs to 198 residues: Large ribosomal subunit protein eL18 (198 aa).

Positions 157–198 are disordered; that stretch reads RHFGASGVPGSHSKPYATNRGKETKRGRRTGRSYKRKAFRHV. The segment covering 179-198 has biased composition (basic residues); sequence ETKRGRRTGRSYKRKAFRHV.

This sequence belongs to the eukaryotic ribosomal protein eL18 family.

It localises to the cytoplasm. In Leishmania major, this protein is Large ribosomal subunit protein eL18 (RPL18-A).